The chain runs to 251 residues: N-acetylmuramoyl-L-alanine amidase CwlA (251 aa).

An N-terminal signal peptide occupies residues 1 to 37 (MEIKQMLVPVSRYSVLCPYEMNPTEITFHNTYNDAPA). The region spanning 38 to 140 (INERNNVANN…QERNGKYCPH (103 aa)) is the N-acetylmuramoyl-L-alanine amidase domain.

Belongs to the N-acetylmuramoyl-L-alanine amidase 2 family.

The protein resides in the secreted. It carries out the reaction Hydrolyzes the link between N-acetylmuramoyl residues and L-amino acid residues in certain cell-wall glycopeptides.. Functionally, autolysins are involved in some important biological processes such as cell separation, cell-wall turnover, competence for genetic transformation, formation of the flagella and sporulation. The chain is N-acetylmuramoyl-L-alanine amidase CwlA (cwlA) from Bacillus sp.